Consider the following 445-residue polypeptide: Exodeoxyribonuclease 7 large subunit (445 aa).

It belongs to the XseA family. In terms of assembly, heterooligomer composed of large and small subunits.

The protein localises to the cytoplasm. It catalyses the reaction Exonucleolytic cleavage in either 5'- to 3'- or 3'- to 5'-direction to yield nucleoside 5'-phosphates.. Bidirectionally degrades single-stranded DNA into large acid-insoluble oligonucleotides, which are then degraded further into small acid-soluble oligonucleotides. The polypeptide is Exodeoxyribonuclease 7 large subunit (Staphylococcus aureus (strain USA300 / TCH1516)).